The sequence spans 397 residues: Cytoplasmic tRNA 2-thiolation protein 2 (397 aa).

The protein belongs to the CTU2/NCS2 family.

It is found in the cytoplasm. It participates in tRNA modification; 5-methoxycarbonylmethyl-2-thiouridine-tRNA biosynthesis. Functionally, plays a central role in 2-thiolation of mcm(5)S(2)U at tRNA wobble positions of tRNA(Lys), tRNA(Glu) and tRNA(Gln). May act by forming a heterodimer with NCS6/CTU1 that ligates sulfur from thiocarboxylated URM1 onto the uridine of tRNAs at wobble position. The chain is Cytoplasmic tRNA 2-thiolation protein 2 from Drosophila grimshawi (Hawaiian fruit fly).